The primary structure comprises 421 residues: Forkhead box protein fkh-3 (421 aa).

A DNA-binding region (fork-head) is located at residues 118-218 (RPPISYVALC…SDADFDFFRK (101 aa)).

Its subcellular location is the nucleus. In terms of biological role, transcription factor. Binds to DNA sequence motif 5'-CTGTTTCA-3'. Regulates expression of a class of small RNAs, known as 21U-RNAs, perhaps acting redundantly with fkh-4 and fkh-5. The protein is Forkhead box protein fkh-3 of Caenorhabditis elegans.